We begin with the raw amino-acid sequence, 318 residues long: UDP-N-acetylenolpyruvoylglucosamine reductase (318 aa).

The FAD-binding PCMH-type domain occupies 38-204 (IGGICPVVVE…LGIEILLKEG (167 aa)). The active site involves Arg-182. Positions 212-232 (SLKDKRDRRNSSQPENKKSAG) are disordered. Basic and acidic residues predominate over residues 213–229 (LKDKRDRRNSSQPENKK). The Proton donor role is filled by Ser-233. Residue Glu-310 is part of the active site.

Belongs to the MurB family. It depends on FAD as a cofactor.

The protein resides in the cytoplasm. The enzyme catalyses UDP-N-acetyl-alpha-D-muramate + NADP(+) = UDP-N-acetyl-3-O-(1-carboxyvinyl)-alpha-D-glucosamine + NADPH + H(+). It functions in the pathway cell wall biogenesis; peptidoglycan biosynthesis. Its function is as follows. Cell wall formation. The polypeptide is UDP-N-acetylenolpyruvoylglucosamine reductase (Leptospira borgpetersenii serovar Hardjo-bovis (strain L550)).